The following is a 221-amino-acid chain: uncharacterized protein (221 aa).

The Peptidase S8 domain occupies 1 to 189; that stretch reads MDSGKDTNGY…NVVYCSEKAV (189 aa).

It belongs to the peptidase S8 family.

This is an uncharacterized protein from Aquifex aeolicus (strain VF5).